The primary structure comprises 1067 residues: MEEVPQKIDFAGEESKILKYWDDIKAFETSVKMSEGKPEYSFYDGPPFATGLPHYGHILAGTIKDTITRYAHQTGHHVERRFGWDCHGLPIEFEIDKLHGVRTKEDVLKMGIPTYNQHCRSIVMKYSHEWEIVVNRMGRWIDMKNNYKTMDTPFMESVWWVFQELFKKDLVYQGFKVMPYSIGCTTPLSNFEASSNYKDVSDPACVVSFQTLDDEKVSILAWTTTPWTLPSNLALTVNPKMEYIKINDIKRNQIFILGKNRTSILYKSDKEYTVLETMKGTDLIGKKYVPMFPYFASDANMGGFVVIGGDFVTDDSGTGIVHTAPAYGEDDFNVCIANGVISRDQFKRPILNSVDANGCFTSDVTDFAGMMVKDAETTKQISIYLKNKGRMVNSANLVHSYPYCWRSDTPLIYKAVGSWFVRVESIRDKLLANNDKTYWVPDFVKEKRFANWLKNATDWAVSRNRYWGTPIPLWISEDGEEVVVIGSIDELERLSGVRVTDLHRESIDHITIPSQKGKGTLRRIEDVFDCWFESGSMPYAQQHYPFENKDKFEKIFPAHFIAEGLDQTRGWFYTLLVLSTALFDKPPFQNLIVNGLVLAADGKKMSKRLKNYPDPMEVVSKVGADSLRLYLINSPVVRAETLKFQEKGVQDMIKDVFLPWFNAYRFFVQNCLRFEKATNTTFQPDIKVALASENVMDKWILASCQSLIAFVRAEMAAYRLYTVVPKLVRFIEDLTNWFVRLNRKRLKGSNGDADCLAALNILYEVLMTICIAMGPFTPFFTEYMYQNLKKALPKEKQMDSVHYVMFPEPIQEAFNTRIEEAISRMQVVIELGRAARDRRTKPIKFPLKEFMVITENQQYLADLESLKSYILEELNIQNIVLTSDEGSFVVVTAEADNKRLGARLKNDFKKISPLISKLTNEQLREFQKTQTIDILGHELTSEDLKIIRKYNGETTNSEPSGNEEILTVLDLTVDSALYEKGLARELINRVQRLRKKSGLTFDDPVSMFYHTKEAELKTAIENNNDYIKETILFNLQFSETTSPSNSFATEIVSIVKDNDAEIYFLKN.

The short motif at 47 to 57 (PFATGLPHYGH) is the 'HIGH' region element. A 'KMSKS' region motif is present at residues 604–608 (KMSKR). Residue K607 participates in ATP binding.

It belongs to the class-I aminoacyl-tRNA synthetase family.

It localises to the cytoplasm. It carries out the reaction tRNA(Ile) + L-isoleucine + ATP = L-isoleucyl-tRNA(Ile) + AMP + diphosphate. The chain is Probable isoleucine--tRNA ligase, cytoplasmic (ileS) from Dictyostelium discoideum (Social amoeba).